The sequence spans 118 residues: Peptidyl-tRNA hydrolase (118 aa).

It belongs to the PTH2 family.

Its subcellular location is the cytoplasm. The catalysed reaction is an N-acyl-L-alpha-aminoacyl-tRNA + H2O = an N-acyl-L-amino acid + a tRNA + H(+). In terms of biological role, the natural substrate for this enzyme may be peptidyl-tRNAs which drop off the ribosome during protein synthesis. The polypeptide is Peptidyl-tRNA hydrolase (Thermococcus sibiricus (strain DSM 12597 / MM 739)).